The sequence spans 902 residues: 4-hydroxyphenylacetate decarboxylase glycyl radical subunit (902 aa).

Positions 38–774 (KRAEDLLDVY…ATLATPDGRL (737 aa)) constitute a PFL domain. Ser-348 and Cys-507 together coordinate 4-hydroxyphenylacetate. Catalysis depends on Cys-507, which acts as the Cysteine radical intermediate. The Proton donor role is filled by Glu-509. 4-hydroxyphenylacetate-binding residues include His-540 and Glu-641. The region spanning 782-902 (GSVSAYAGTD…VIARTEYEGV (121 aa)) is the Glycine radical domain. The residue at position 877 (Gly-877) is a Glycine radical.

This sequence belongs to the glycyl radical enzyme (GRE) family. HPAD subfamily. Heterooctamer consisting of 4 large (HpdB) subunits and 4 small (HpdC) subunits. Also forms a catalytically inactive homodimer. In terms of processing, phosphorylated on serine. Phosphorylation may trigger the formation of the active heterooctamers and thereby regulates enzyme activity. Requires the activating protein HpdA to generate the key active site glycyl radical that is involved in catalysis.

It catalyses the reaction 4-hydroxyphenylacetate + H(+) = 4-methylphenol + CO2. It carries out the reaction 3,4-dihydroxyphenylacetate + H(+) = 4-methylcatechol + CO2. The catalysed reaction is 2-hydroxy-2-(4-hydroxyphenyl)acetate + H(+) = 4-hydroxybenzyl alcohol + CO2. With respect to regulation, enzyme activity catalyzed by the HPA decarboxylase complex is rapidly and irreversibly inactivated by oxygen. Competitively inhibited by p-hydroxyphenylacetamide. Not inhibited by m- or o-hydroxyphenyl-acetate, p-hydroxybenzoate or p-hydroxyphenylpropionate. Glycyl radical subunit of the HPA decarboxylase that decarboxylates phenylacetates with a hydroxyl group in the p-position. Active toward 4-hydroxyphenylacetate, 3,4-dihydroxyphenylacetate and to a lesser extent p-hydroxymandelate (2-hydroxy-2-(4-hydroxyphenyl)acetate), forming 4-methylphenol, 4-methylcatechol and 4-hydroxybenzylalcohol, respectively. Is likely involved in the catabolism of aromatic amino acids such as tyrosine fermentation. 4-methylphenol (p-cresol) formation provides metabolic toxicity, which may benefit the pathogen C.difficile by suppression of the endogenous gastrointestinal microflora, allowing the development of gastrointestinal infections. The large subunit is the catalytic subunit that binds the substrate. The chain is 4-hydroxyphenylacetate decarboxylase glycyl radical subunit from Clostridioides difficile (Peptoclostridium difficile).